Consider the following 233-residue polypeptide: Histone H1-I (233 aa).

Disordered regions lie at residues 1–55 (MSDS…HPPV) and 115–233 (TGAS…KKSK). Over residues 17-29 (KAASPAKSPAKSP) the composition is skewed to low complexity. Residues 51–125 (THPPVSEMVV…GASGSFKMPP (75 aa)) enclose the H15 domain. Composition is skewed to basic and acidic residues over residues 128–137 (KKVDRPESAP) and 146–155 (TRVERKEKKV). Basic residues-rich tracts occupy residues 172–213 (AAKK…KPTP) and 223–233 (AAARKPAKKSK).

The protein belongs to the histone H1/H5 family.

The protein resides in the nucleus. It localises to the chromosome. Functionally, histones H1 are necessary for the condensation of nucleosome chains into higher-order structures. In Glyptotendipes barbipes (Midge), this protein is Histone H1-I.